Here is a 232-residue protein sequence, read N- to C-terminus: MSILDSIQRQIPPIHKEGYPFIGGFALASLILFWLWSPLGWIGTILTVWCALFFRDPVRVTPVREGLVVSPADGRVSMITMALPPAELGLGDRPLPRISVFMSVFNCHVNRSPIAGRVDRIAYRPGLFINAELDKASEDNERNSLVITTPTARIGVVQIAGLIAKRIVCFVREGQAIGAGERFGLIRFGSRLDVYLPVGTKALVSEGQTAIAGETILADLAGDDPSRAYRAN.

The Schiff-base intermediate with substrate; via pyruvic acid role is filled by S190. S190 carries the pyruvic acid (Ser); by autocatalysis modification.

This sequence belongs to the phosphatidylserine decarboxylase family. PSD-A subfamily. As to quaternary structure, heterodimer of a large membrane-associated beta subunit and a small pyruvoyl-containing alpha subunit. Pyruvate is required as a cofactor. Is synthesized initially as an inactive proenzyme. Formation of the active enzyme involves a self-maturation process in which the active site pyruvoyl group is generated from an internal serine residue via an autocatalytic post-translational modification. Two non-identical subunits are generated from the proenzyme in this reaction, and the pyruvate is formed at the N-terminus of the alpha chain, which is derived from the carboxyl end of the proenzyme. The post-translation cleavage follows an unusual pathway, termed non-hydrolytic serinolysis, in which the side chain hydroxyl group of the serine supplies its oxygen atom to form the C-terminus of the beta chain, while the remainder of the serine residue undergoes an oxidative deamination to produce ammonia and the pyruvoyl prosthetic group on the alpha chain.

It is found in the cell membrane. It catalyses the reaction a 1,2-diacyl-sn-glycero-3-phospho-L-serine + H(+) = a 1,2-diacyl-sn-glycero-3-phosphoethanolamine + CO2. Its pathway is phospholipid metabolism; phosphatidylethanolamine biosynthesis; phosphatidylethanolamine from CDP-diacylglycerol: step 2/2. Functionally, catalyzes the formation of phosphatidylethanolamine (PtdEtn) from phosphatidylserine (PtdSer). This is Phosphatidylserine decarboxylase proenzyme from Bradyrhizobium diazoefficiens (strain JCM 10833 / BCRC 13528 / IAM 13628 / NBRC 14792 / USDA 110).